The following is a 78-amino-acid chain: Small ribosomal subunit protein bS18 (78 aa).

Belongs to the bacterial ribosomal protein bS18 family. Part of the 30S ribosomal subunit. Forms a tight heterodimer with protein bS6.

Functionally, binds as a heterodimer with protein bS6 to the central domain of the 16S rRNA, where it helps stabilize the platform of the 30S subunit. The protein is Small ribosomal subunit protein bS18 of Lactobacillus johnsonii (strain CNCM I-12250 / La1 / NCC 533).